A 212-amino-acid chain; its full sequence is NAD(P)H-quinone oxidoreductase subunit K, chloroplastic (212 aa).

[4Fe-4S] cluster is bound by residues C43, C44, C108, and C139.

This sequence belongs to the complex I 20 kDa subunit family. As to quaternary structure, NDH is composed of at least 16 different subunits, 5 of which are encoded in the nucleus. [4Fe-4S] cluster serves as cofactor.

The protein localises to the plastid. Its subcellular location is the chloroplast thylakoid membrane. The enzyme catalyses a plastoquinone + NADH + (n+1) H(+)(in) = a plastoquinol + NAD(+) + n H(+)(out). It catalyses the reaction a plastoquinone + NADPH + (n+1) H(+)(in) = a plastoquinol + NADP(+) + n H(+)(out). NDH shuttles electrons from NAD(P)H:plastoquinone, via FMN and iron-sulfur (Fe-S) centers, to quinones in the photosynthetic chain and possibly in a chloroplast respiratory chain. The immediate electron acceptor for the enzyme in this species is believed to be plastoquinone. Couples the redox reaction to proton translocation, and thus conserves the redox energy in a proton gradient. The protein is NAD(P)H-quinone oxidoreductase subunit K, chloroplastic of Phaseolus vulgaris (Kidney bean).